A 62-amino-acid chain; its full sequence is Short neurotoxin 2 (62 aa).

Residues methionine 1–glycine 20 form a disordered region. Cystine bridges form between cysteine 3-cysteine 24, cysteine 17-cysteine 41, cysteine 43-cysteine 54, and cysteine 55-cysteine 60.

This sequence belongs to the three-finger toxin family. Short-chain subfamily. Type I alpha-neurotoxin sub-subfamily. As to expression, expressed by the venom gland.

It is found in the secreted. Functionally, binds to muscle nicotinic acetylcholine receptor (nAChR) and inhibit acetylcholine from binding to the receptor, thereby impairing neuromuscular transmission. The chain is Short neurotoxin 2 from Oxyuranus scutellatus scutellatus (Australian taipan).